A 419-amino-acid chain; its full sequence is Serine hydroxymethyltransferase 1 (419 aa).

Residues Leu-121 and 125-127 each bind (6S)-5,6,7,8-tetrahydrofolate; that span reads GHL. An N6-(pyridoxal phosphate)lysine modification is found at Lys-230. Position 356–358 (356–358) interacts with (6S)-5,6,7,8-tetrahydrofolate; it reads SPF.

It belongs to the SHMT family. Homodimer. Requires pyridoxal 5'-phosphate as cofactor.

The protein localises to the cytoplasm. The enzyme catalyses (6R)-5,10-methylene-5,6,7,8-tetrahydrofolate + glycine + H2O = (6S)-5,6,7,8-tetrahydrofolate + L-serine. Its pathway is one-carbon metabolism; tetrahydrofolate interconversion. It functions in the pathway amino-acid biosynthesis; glycine biosynthesis; glycine from L-serine: step 1/1. Functionally, catalyzes the reversible interconversion of serine and glycine with tetrahydrofolate (THF) serving as the one-carbon carrier. This reaction serves as the major source of one-carbon groups required for the biosynthesis of purines, thymidylate, methionine, and other important biomolecules. Also exhibits THF-independent aldolase activity toward beta-hydroxyamino acids, producing glycine and aldehydes, via a retro-aldol mechanism. The chain is Serine hydroxymethyltransferase 1 from Colwellia psychrerythraea (strain 34H / ATCC BAA-681) (Vibrio psychroerythus).